The sequence spans 799 residues: Transcriptional activator FLO8 (799 aa).

Polar residues predominate over residues 1 to 10 (MSYKVNSSYP). Disordered regions lie at residues 1-20 (MSYK…EQPY), 37-68 (TNSE…SDLK), 101-127 (AHLD…QNTF), 255-406 (TTGA…RVNK), 431-503 (NSKS…SVIL), 568-622 (ESGK…PHGF), 644-691 (VSQE…YDFD), and 705-758 (AYAS…NENQ). Low complexity predominate over residues 41–55 (QQRQQQQQQQQQQQQ). The LisH domain occupies 73–105 (CKNTLNEYIFDFLTKSSLKNTAAAFAQDAHLDR). Positions 270–285 (DFTNVGPTQNRSQNVT) are enriched in polar residues. The span at 307 to 317 (NNNTTNNTTNN) shows a compositional bias: low complexity. The segment covering 318-340 (KSPVNQPKSLKTMHSTDKPNNVP) has biased composition (polar residues). Low complexity predominate over residues 341 to 353 (TSKSTRSRSATSK). Residues 354-370 (AKGKVKAGLVAKRRRKN) show a composition bias toward basic residues. 2 stretches are compositionally biased toward polar residues: residues 371–396 (NTAT…TTSE) and 460–480 (KAST…NSVV). A compositionally biased stretch (basic residues) spans 482-497 (GKKRSPPNTRVSRRKS). 2 stretches are compositionally biased toward polar residues: residues 584 to 593 (SKVSASSPLS) and 660 to 675 (GNDS…TLST).

Belongs to the FLO8 family.

The protein localises to the nucleus. In terms of biological role, required for diploid filamentous growth, haploid invasive growth and flocculation. Putative transcriptional activator of FLO1. This Saccharomyces cerevisiae (strain ATCC 204508 / S288c) (Baker's yeast) protein is Transcriptional activator FLO8 (FLO8).